A 258-amino-acid chain; its full sequence is Chaperone protein caf1M (258 aa).

Residues 1–20 (MILNRLSTLGIITFGMLSFA) form the signal peptide. The cysteines at positions 121 and 160 are disulfide-linked.

Belongs to the periplasmic pilus chaperone family.

It is found in the periplasm. Has a stimulatory role for the envelope antigen F1 secretion. It seems to interact with the subunit polypeptide and to prevent it from digestion by a protease. The protein is Chaperone protein caf1M (caf1M) of Yersinia pestis.